Reading from the N-terminus, the 444-residue chain is Methylenetetrahydrofolate--tRNA-(uracil-5-)-methyltransferase TrmFO (444 aa).

10 to 15 (GAGLAG) contributes to the FAD binding site.

This sequence belongs to the MnmG family. TrmFO subfamily. Requires FAD as cofactor.

It is found in the cytoplasm. The enzyme catalyses uridine(54) in tRNA + (6R)-5,10-methylene-5,6,7,8-tetrahydrofolate + NADH + H(+) = 5-methyluridine(54) in tRNA + (6S)-5,6,7,8-tetrahydrofolate + NAD(+). The catalysed reaction is uridine(54) in tRNA + (6R)-5,10-methylene-5,6,7,8-tetrahydrofolate + NADPH + H(+) = 5-methyluridine(54) in tRNA + (6S)-5,6,7,8-tetrahydrofolate + NADP(+). Its function is as follows. Catalyzes the folate-dependent formation of 5-methyl-uridine at position 54 (M-5-U54) in all tRNAs. The sequence is that of Methylenetetrahydrofolate--tRNA-(uracil-5-)-methyltransferase TrmFO from Streptococcus suis (strain 98HAH33).